Here is a 569-residue protein sequence, read N- to C-terminus: MVETTGISDQTKKVLIGVAAAATVAGVGYLVYKSFGGSDLERDLEEIKALGNLKFKEKQYDSALEAFTKGVEKAGPNSSDQIVAMLYQNRAACREKVGHSPFDILNDCMAALKVDKKYTKAYLRAAKALNDVGKKQDALAYLLAAFTLDSSLNKTNFEFFGKLLAIEPMSDCHIGKPLKIEDVKPQPVALFRIQQWCDTWDILDLFKTDLTRFEPEVLSEDQKQYQLALEKFKKGKYEELIDLLTEENSYPPAMILRGKMLSYSTDPNEATRYIDKVGAKINELIGSEEDEERKKLMRDAFDILKIELMYTMADLDKFLESVPKDDKERLFKLYSFASIFVVIRLNHFYSLKIWFQYNGCVLDTAVTNHEQQMMADTNNANRLLTEAEKNGTLTPHLSMIVTFLKLCTSEDYADVHRRIREMEELAESRSTHFNLVLMSKVYMMTNNEESSKKLLEEAARITTRYLVPSRHLQTADLHVHKPEAERLRLTTESANAAIAVDPFNFSAHVLHLLGTNGPEPMIKKENYERAMESIRNAALFAPPRELLMLKRMIPLMNAKKRAAEMLDMY.

At 1 to 12 the chain is on the mitochondrial intermembrane side; it reads MVETTGISDQTK. Residues 13-32 traverse the membrane as a helical segment; the sequence is KVLIGVAAAATVAGVGYLVY. Over 33-569 the chain is Cytoplasmic; it reads KSFGGSDLER…KRAAEMLDMY (537 aa). 4 TPR repeats span residues 44–77, 119–152, 221–254, and 510–544; these read LEEI…AGPN, TKAY…DSSL, DQKQ…PPAM, and LHLL…APPR.

This sequence belongs to the Tom70 family. Forms part of the preprotein translocase complex of the outer mitochondrial membrane (TOM complex). As to expression, expressed in body wall muscle cells, the pharynx and structures in the tail.

Its subcellular location is the mitochondrion outer membrane. Receptor that accelerates the import of all mitochondrial precursor proteins. The protein is Mitochondrial import receptor subunit tomm-70 of Caenorhabditis elegans.